Reading from the N-terminus, the 436-residue chain is Enolase (436 aa).

Position 167 (glutamine 167) interacts with (2R)-2-phosphoglycerate. The active-site Proton donor is glutamate 209. Mg(2+) contacts are provided by aspartate 246, glutamate 291, and aspartate 318. (2R)-2-phosphoglycerate-binding residues include lysine 343, arginine 372, serine 373, and lysine 394. Lysine 343 (proton acceptor) is an active-site residue.

The protein belongs to the enolase family. As to quaternary structure, component of the RNA degradosome, a multiprotein complex involved in RNA processing and mRNA degradation. The cofactor is Mg(2+).

The protein resides in the cytoplasm. Its subcellular location is the secreted. The protein localises to the cell surface. It catalyses the reaction (2R)-2-phosphoglycerate = phosphoenolpyruvate + H2O. Its pathway is carbohydrate degradation; glycolysis; pyruvate from D-glyceraldehyde 3-phosphate: step 4/5. Its function is as follows. Catalyzes the reversible conversion of 2-phosphoglycerate (2-PG) into phosphoenolpyruvate (PEP). It is essential for the degradation of carbohydrates via glycolysis. This Haemophilus influenzae (strain ATCC 51907 / DSM 11121 / KW20 / Rd) protein is Enolase.